The following is a 219-amino-acid chain: Protoglabretal synthase ISM2 (219 aa).

The next 5 membrane-spanning stretches (helical) occupy residues 26–46, 59–79, 112–132, 144–164, and 178–198; these read VHAW…VLAG, LMIW…YWLF, AVVG…LFAV, ILQL…FITA, and YYKY…LIII. The EXPERA domain maps to 55-197; the sequence is TDKWLMIWWA…TWLLFPALII (143 aa).

This sequence belongs to the EBP family.

It is found in the membrane. The enzyme catalyses 7,8-epoxymelianol = protoglabretal. Its pathway is secondary metabolite biosynthesis; terpenoid biosynthesis. In terms of biological role, isomerase involved in the biosynthesis of glabretanes triterpene natural products such as glabretal, a component with in vitro antiproliferative properties on lymphocytes. Catalyzes the conversion of 7,8-epoxymelianol to protoglabretal via skeletal rearrangements. The sequence is that of Protoglabretal synthase ISM2 from Ailanthus altissima (Tree-of-heaven).